The following is a 212-amino-acid chain: Telomere repeats-binding bouquet formation protein 2 (212 aa).

Belongs to the TERB2 family. Component of the MAJIN-TERB1-TERB2 complex.

Meiosis-specific telomere-associated protein involved in meiotic telomere attachment to the nucleus inner membrane, a crucial step for homologous pairing and synapsis. Component of the MAJIN-TERB1-TERB2 complex, which promotes telomere cap exchange by mediating attachment of telomeric DNA to the inner nuclear membrane and replacement of the protective cap of telomeric chromosomes: in early meiosis, the MAJIN-TERB1-TERB2 complex associates with telomeric DNA and the shelterin/telosome complex. During prophase, the complex matures and promotes release of the shelterin/telosome complex from telomeric DNA. The polypeptide is Telomere repeats-binding bouquet formation protein 2 (Danio rerio (Zebrafish)).